The chain runs to 347 residues: MRASMLRLIRSRSSSAAPRPHLLRRAYGSESVPERKVAVLGAAGGIGQPLALLMKLNPLVSQLALYDIAGTPGVAADVGHINTRSEVAGYVGEEQLGQALEGSDVVIIPAGVPRKPGMTRDDLFNINAGIVKSLCTAIAKYCPNAVVNMISNPVNSTVPIAAEIFKKAGTYNEKKLLGVTTLDVVRAKTFYAGKAKVPVEEVNVPVVGGHAGITILPLFSQAVPKANLADEDIKALTKRTQDGGTEVVEAKAGKGSATLSMAYAGALFADACLKGLNGVPDVVECSFVQSSIITELPFFASKVKLGKNGVEEVLELGPMSDYEKQGLEILIPELKASIEKGIKFANQ.

The transit peptide at 1-27 directs the protein to the mitochondrion; that stretch reads MRASMLRLIRSRSSSAAPRPHLLRRAY. NAD(+)-binding positions include 41 to 47 and D67; that span reads GAAGGIG. 2 residues coordinate substrate: R114 and R120. Residues N127 and 150–152 each bind NAD(+); that span reads ISN. 2 residues coordinate substrate: N152 and R186. The active-site Proton acceptor is H210. M261 is a binding site for NAD(+).

The protein belongs to the LDH/MDH superfamily. MDH type 1 family. As to quaternary structure, homodimer.

It is found in the mitochondrion matrix. It catalyses the reaction (S)-malate + NAD(+) = oxaloacetate + NADH + H(+). This is Malate dehydrogenase, mitochondrial (MDH) from Eucalyptus gunnii (Cider gum).